We begin with the raw amino-acid sequence, 186 residues long: Ribosome-recycling factor (186 aa).

It belongs to the RRF family.

It is found in the cytoplasm. In terms of biological role, responsible for the release of ribosomes from messenger RNA at the termination of protein biosynthesis. May increase the efficiency of translation by recycling ribosomes from one round of translation to another. The chain is Ribosome-recycling factor from Rickettsia canadensis (strain McKiel).